The chain runs to 497 residues: Cytochrome P450 26A1 (497 aa).

Cys-442 contributes to the heme binding site.

It belongs to the cytochrome P450 family. Heme serves as cofactor. As to expression, expressed in most fetal and adult tissues with highest levels in adult liver, heart, pituitary gland, adrenal gland, placenta and regions of the brain. Expressed at high levels in lung, pancreas, skin and uterus (at protein level). Lower expression level is detected in spleen, kidney, intestine and adipose tissue (at protein level).

The protein localises to the endoplasmic reticulum membrane. The protein resides in the microsome membrane. The catalysed reaction is all-trans-retinoate + reduced [NADPH--hemoprotein reductase] + O2 = all-trans-(4S)-hydroxyretinoate + oxidized [NADPH--hemoprotein reductase] + H2O + H(+). It catalyses the reaction all-trans-(4S)-hydroxyretinoate + reduced [NADPH--hemoprotein reductase] + O2 = all-trans-(4S,16)-dihydroxyretinoate + oxidized [NADPH--hemoprotein reductase] + H2O + H(+). It carries out the reaction all-trans-retinoate + reduced [NADPH--hemoprotein reductase] + O2 = all-trans-18-hydroxyretinoate + oxidized [NADPH--hemoprotein reductase] + H2O + H(+). Functionally, a cytochrome P450 monooxygenase involved in the metabolism of retinoates (RAs), the active metabolites of vitamin A, and critical signaling molecules in animals. RAs exist as at least four different isomers: all-trans-RA (atRA), 9-cis-RA, 13-cis-RA, and 9,13-dicis-RA, where atRA is considered to be the biologically active isomer, although 9-cis-RA and 13-cis-RA also have activity. Catalyzes the hydroxylation of atRA primarily at C-4 and C-18, thereby contributing to the regulation of atRA homeostasis and signaling. Hydroxylation of atRA limits its biological activity and initiates a degradative process leading to its eventual elimination. Involved in the convertion of atRA to all-trans-4-oxo-RA. Able to metabolize other RAs such as 9-cis, 13-cis and 9,13-di-cis RA. Can oxidize all-trans-13,14-dihydroretinoate (DRA) to metabolites which could include all-trans-4-oxo-DRA, all-trans-4-hydroxy-DRA, all-trans-5,8-epoxy-DRA, and all-trans-18-hydroxy-DRA. May play a role in the oxidative metabolism of xenobiotics such as tazarotenic acid. The protein is Cytochrome P450 26A1 of Homo sapiens (Human).